The sequence spans 326 residues: MTVHGNTKTSPMVTLLAGGVSGVIAKSTIAPLERVKILYQVKSKMYSFNSVYGLMKNIIKNEGLAGLWKGNTATILRIFPYSAIQWTSYDYLKNNFVTDKKSSVQIFIAGSLGFSCAILLTYPLDVIRARLALSYSNNNNNNSINSKNLNSSTQPPKVLKNGIGAVNIEKSIDFNGYKTKGLFKGIWRGILPTLYGSIPYAGVGYSSFEYFKRIAPDSFRNEKGDVIGIYKLISGGVAGGLGQTAAYPLDVVRRRIQTTGYGDGKGVENLKHSTLKTMFTIFQKEGIYALFKGISINYIKVIPTNGVAFLTYETLCDYFNSKLNKN.

Solcar repeat units follow at residues 9 to 95 (TSPM…LKNN), 101 to 214 (KSSV…FKRI), and 226 to 318 (VIGI…LCDY). A run of 6 helical transmembrane segments spans residues 12–32 (MVTL…IAPL), 64–84 (LAGL…YSAI), 104–124 (VQIF…TYPL), 185–205 (GIWR…GVGY), 226–246 (VIGI…QTAA), and 290–310 (LFKG…VAFL).

It belongs to the mitochondrial carrier (TC 2.A.29) family.

The protein resides in the mitochondrion inner membrane. In terms of biological role, mitochondrial solute carriers shuttle metabolites, nucleotides, and cofactors through the mitochondrial inner membrane. May be involved in the accumulation of coenzyme A in the mitochondrial matrix. The protein is Mitochondrial substrate carrier family protein R (mcfR) of Dictyostelium discoideum (Social amoeba).